An 816-amino-acid polypeptide reads, in one-letter code: Lon protease (816 aa).

One can recognise a Lon N-terminal domain in the interval 40 to 244 (VPLIAVPSHP…KVLELLYEEL (205 aa)). 398–405 (GPPGVGKT) serves as a coordination point for ATP. The 181-residue stretch at 636 to 816 (AMSPGMVMGL…SMKEVIKLLF (181 aa)) folds into the Lon proteolytic domain. Residues serine 724 and lysine 767 contribute to the active site.

Belongs to the peptidase S16 family. As to quaternary structure, homohexamer. Organized in a ring with a central cavity.

The protein resides in the cytoplasm. It carries out the reaction Hydrolysis of proteins in presence of ATP.. Functionally, ATP-dependent serine protease that mediates the selective degradation of mutant and abnormal proteins as well as certain short-lived regulatory proteins. Required for cellular homeostasis and for survival from DNA damage and developmental changes induced by stress. Degrades polypeptides processively to yield small peptide fragments that are 5 to 10 amino acids long. Binds to DNA in a double-stranded, site-specific manner. This is Lon protease from Borrelia duttonii (strain Ly).